The sequence spans 319 residues: Olfactory receptor 5B21 (319 aa).

The Extracellular segment spans residues 1-26 (MTSMENITEVTEFILLGLTDDPNLQV). An N-linked (GlcNAc...) asparagine glycan is attached at Asn-6. A helical membrane pass occupies residues 27 to 47 (PLLLIFLFIYLVTLIGNGGMM). The Cytoplasmic segment spans residues 48-55 (VIIFSDSH). The helical transmembrane segment at 56–76 (LHTPMYFFLSNLSFVDLGYSS) threads the bilayer. The Extracellular portion of the chain corresponds to 77 to 100 (AVAPKMVAALQSGNKVISYNGCAA). A disulfide bond links Cys-98 and Cys-190. Residues 101 to 121 (QFFFFVGFATVECYLLASMAY) form a helical membrane-spanning segment. Residues 122-134 (DRHAAVCRPLHYT) lie on the Cytoplasmic side of the membrane. A helical membrane pass occupies residues 135-155 (TTMTTGVCTILTIGSYTCGFL). At 156–197 (NASIHAADTFKLSFCGSNKINHFFCDIPPLLALACSSTHISK) the chain is on the extracellular side. Residues 198–218 (LVVFFVVGFNVFFTLLVIIIS) traverse the membrane as a helical segment. Over 219–238 (YFFIYIAIQNMKSSEGRKKA) the chain is Cytoplasmic. The helical transmembrane segment at 239–259 (FSTCASHLTAVSIFYGTIIFM) threads the bilayer. Over 260-272 (YLQPSSGQSMDTD) the chain is Extracellular. Residues 273-293 (KIASVFYTVVIPMLNPLIYSL) traverse the membrane as a helical segment. The Cytoplasmic portion of the chain corresponds to 294–319 (RNREVKSALWKILNRFYPASFSVSRK).

The protein belongs to the G-protein coupled receptor 1 family.

The protein localises to the cell membrane. Odorant receptor. This Mus musculus (Mouse) protein is Olfactory receptor 5B21.